The chain runs to 707 residues: MKEWRREILGRELVVQHGKVAKQSSGAVLVRFGDTAVLATANISDKVIEGIDFVPLTVEFQERFYAAGKIPGGFIKREGKPSESAILSARLIDRPIRPLFPKKLRNEIQVIVTVLSADPNVPPDVVGIFAVSLALNVSKIPFEGIVAGIRIGYRDGQFIAFPTEEDIEKGLMDITVAGTKDAVTMVEGEAKEVSEEDMVKALRFAHSVIKELVDFQEEILSEFNVEKIPVVEPEPPEGLVETFNSLLDREELERRILVKAKKEREAALKEYEEKLLSQTAEALSIVDPEEIKPFVSELYEEAVKKTMRRLIVEKGIRADGRKPNEIRPISCEVGLFPRTHGSALFTRGETQSLGIVTLGAPMDVQIIDTLLEEGVKRFMLHYNFPPFCTGEVKPLRGPSRREIGHGHLAERALKNMLPPEEEFPYTIRVVSEILESNGSSSMATVCSGSLALMDAGVPIRKHVAGIAMGLILEEDAEVILTDIIGMEDHYGDMDFKVAGTRDGITAFQMDCKVSGVSDELLMKALMQAREARMYILDKMYETISAPRPHLSRYAPIIKVTKIDPDKVADVIGPGGRVIKKIIKDFDVKVEIDDETGLVKVVGNSEENVDNAIALIREIAKEIEVGEILEGKITRIEPYGLFIEVRPGKIGLLHQSKVGEDMRQFLKKVKVGDTIKVQVINIDDLGRLQFKRVKEESPQHGEVHNKRH.

Asp-488 and Asp-494 together coordinate Mg(2+). A KH domain is found at 555 to 615; that stretch reads PIIKVTKIDP…ENVDNAIALI (61 aa). Residues 625-692 enclose the S1 motif domain; the sequence is GEILEGKITR…DLGRLQFKRV (68 aa).

Belongs to the polyribonucleotide nucleotidyltransferase family. The cofactor is Mg(2+).

Its subcellular location is the cytoplasm. The catalysed reaction is RNA(n+1) + phosphate = RNA(n) + a ribonucleoside 5'-diphosphate. In terms of biological role, involved in mRNA degradation. Catalyzes the phosphorolysis of single-stranded polyribonucleotides processively in the 3'- to 5'-direction. The sequence is that of Polyribonucleotide nucleotidyltransferase from Thermotoga neapolitana (strain ATCC 49049 / DSM 4359 / NBRC 107923 / NS-E).